Consider the following 707-residue polypeptide: 65-kDa microtubule-associated protein 3 (707 aa).

Coiled coils occupy residues 49-84, 157-179, 269-289, 354-374, and 464-486; these read LEVY…CSAM, NLSM…EKID, QQEY…ITEA, IVDA…IKEE, and LEEY…DQKK. Residues 495–574 form a disordered region; sequence QEALYGSKPS…PSRKQSMNPS (80 aa). Low complexity predominate over residues 500–512; sequence GSKPSPSKPLGGK. 2 positions are modified to phosphoserine: S504 and S528.

The protein belongs to the MAP65/ASE1 family. Forms a dimer. Binds to microtubules (MT) during cell division. Bundles polymerized MT via the formation of 25-nm crossbridges with centrally located endocytic MT, and midline phragmoplast MT. Expressed in all tissues enriched in dividing cells, such as the root and shoot apical meristem, foliar primordia, and young leaves, and embryos.

The protein localises to the nucleus. Its subcellular location is the cytoplasm. It is found in the cytoskeleton. It localises to the phragmoplast. In terms of biological role, microtubule-associated protein that plays a critical role in organizing the mitotic microtubule array during both early and late mitosis in all plant organs. Essential for the cytokinesis, especially in roots, by maintaining the integrity of the overlapped microtubules in the phragmoplast. Required during root morphogenesis. Needed for giant cell development during root knot nematode infection, where cytokinesis is initiated but not completed. This chain is 65-kDa microtubule-associated protein 3 (MAP65-3), found in Arabidopsis thaliana (Mouse-ear cress).